We begin with the raw amino-acid sequence, 61 residues long: Large ribosomal subunit protein bL28 (61 aa).

Belongs to the bacterial ribosomal protein bL28 family.

The chain is Large ribosomal subunit protein bL28 (rpmB) from Geobacillus stearothermophilus (Bacillus stearothermophilus).